The sequence spans 1128 residues: Nck-associated protein 1 (1128 aa).

The interval 640-665 (AVNKKSKKQTGKKGEPEREKPGVESM) is disordered. Positions 651-665 (KKGEPEREKPGVESM) are enriched in basic and acidic residues. Residues 995–1015 (IACLLMVFVAVSMPTLASNVM) traverse the membrane as a helical segment.

The protein belongs to the HEM-1/HEM-2 family.

It localises to the cell membrane. Its subcellular location is the cell projection. It is found in the lamellipodium membrane. In terms of biological role, part of the WAVE complex that regulates lamellipodia formation. The WAVE complex regulates actin filament reorganization via its interaction with the Arp2/3 complex. Actin remodeling activity is regulated by RAC1. Plays a role in neural tube closure. This Danio rerio (Zebrafish) protein is Nck-associated protein 1 (nckap1).